The sequence spans 327 residues: Glycerol-3-phosphate dehydrogenase [NAD(P)+] (327 aa).

The NADPH site is built by Trp-15, Arg-35, and Lys-109. Sn-glycerol 3-phosphate-binding residues include Lys-109, Gly-137, and Ser-139. Residue Ala-141 participates in NADPH binding. Sn-glycerol 3-phosphate is bound by residues Lys-192, Asp-245, Ser-255, Arg-256, and Asn-257. The active-site Proton acceptor is Lys-192. Arg-256 serves as a coordination point for NADPH. Residues Leu-275 and Glu-277 each coordinate NADPH.

Belongs to the NAD-dependent glycerol-3-phosphate dehydrogenase family.

It localises to the cytoplasm. It carries out the reaction sn-glycerol 3-phosphate + NAD(+) = dihydroxyacetone phosphate + NADH + H(+). The catalysed reaction is sn-glycerol 3-phosphate + NADP(+) = dihydroxyacetone phosphate + NADPH + H(+). It participates in membrane lipid metabolism; glycerophospholipid metabolism. Catalyzes the reduction of the glycolytic intermediate dihydroxyacetone phosphate (DHAP) to sn-glycerol 3-phosphate (G3P), the key precursor for phospholipid synthesis. This chain is Glycerol-3-phosphate dehydrogenase [NAD(P)+], found in Chelativorans sp. (strain BNC1).